Consider the following 499-residue polypeptide: Alpha-amylase B (499 aa).

Positions methionine 1–alanine 21 are cleaved as a signal peptide. The cysteines at positions 51 and 59 are disulfide-linked. Substrate contacts are provided by glutamine 56 and tryptophan 104. Asparagine 142 is a binding site for Ca(2+). Residue histidine 143 coordinates substrate. A disulfide bridge connects residues cysteine 171 and cysteine 185. 2 residues coordinate Ca(2+): glutamate 183 and aspartate 196. Asparagine 218 carries an N-linked (GlcNAc...) asparagine glycan. Residue arginine 225 coordinates substrate. Residues aspartate 227, histidine 231, and glutamate 251 each coordinate Ca(2+). The active-site Nucleophile is aspartate 227. Lysine 230–histidine 231 contacts substrate. Catalysis depends on glutamate 251, which acts as the Proton donor. Glycine 255 contributes to the substrate binding site. Cysteine 261 and cysteine 304 form a disulfide bridge. Positions 318 and 365 each coordinate substrate. Cysteine 461 and cysteine 496 are joined by a disulfide.

Belongs to the glycosyl hydrolase 13 family. It depends on Ca(2+) as a cofactor.

The enzyme catalyses Endohydrolysis of (1-&gt;4)-alpha-D-glucosidic linkages in polysaccharides containing three or more (1-&gt;4)-alpha-linked D-glucose units.. This chain is Alpha-amylase B (amyB), found in Aspergillus awamori (Black koji mold).